Reading from the N-terminus, the 309-residue chain is Homoserine O-succinyltransferase (309 aa).

Catalysis depends on C142, which acts as the Acyl-thioester intermediate. Residues K163 and S192 each coordinate substrate. The Proton acceptor role is filled by H235. E237 is an active-site residue. R249 is a substrate binding site.

This sequence belongs to the MetA family. Homodimer.

It is found in the cytoplasm. The enzyme catalyses L-homoserine + succinyl-CoA = O-succinyl-L-homoserine + CoA. It participates in amino-acid biosynthesis; L-methionine biosynthesis via de novo pathway; O-succinyl-L-homoserine from L-homoserine: step 1/1. Functionally, transfers a succinyl group from succinyl-CoA to L-homoserine, forming succinyl-L-homoserine. The chain is Homoserine O-succinyltransferase from Escherichia coli O17:K52:H18 (strain UMN026 / ExPEC).